The following is a 555-amino-acid chain: Glucose-6-phosphate isomerase (555 aa).

E360 acts as the Proton donor in catalysis. Active-site residues include H391 and K519.

It belongs to the GPI family.

The protein resides in the cytoplasm. It catalyses the reaction alpha-D-glucose 6-phosphate = beta-D-fructose 6-phosphate. The protein operates within carbohydrate biosynthesis; gluconeogenesis. It functions in the pathway carbohydrate degradation; glycolysis; D-glyceraldehyde 3-phosphate and glycerone phosphate from D-glucose: step 2/4. Functionally, catalyzes the reversible isomerization of glucose-6-phosphate to fructose-6-phosphate. The chain is Glucose-6-phosphate isomerase from Acinetobacter baumannii (strain AB307-0294).